The sequence spans 406 residues: 26S proteasome regulatory subunit 8 (406 aa).

Residue A2 is modified to N-acetylalanine. S120 carries the phosphoserine modification. Residues 186–406 form a may mediate interaction with PRPF9 region; sequence VLLYGPPGTG…KNMSIKKLWK (221 aa). 190–197 provides a ligand contact to ATP; that stretch reads GPPGTGKT. K222 carries the N6-acetyllysine modification.

Belongs to the AAA ATPase family. In terms of assembly, component of the 19S proteasome regulatory particle complex. The 26S proteasome consists of a 20S core particle (CP) and two 19S regulatory subunits (RP). The regulatory particle is made of a lid composed of 9 subunits, a base containing 6 ATPases including PSMC5 and few additional components. Component of a complex with USP49 and RUVBL1. Interacts with PRPF19. Interacts with TRIM5. Interacts with NDC80. Interacts with PAAF1. Interacts, in vitro, with the thyroid hormone receptor (in a thyroid hormone T3-dependent manner) and with retinoid X receptor (RXR). Interacts with ERCC6.

The protein resides in the cytoplasm. It localises to the nucleus. Functionally, component of the 26S proteasome, a multiprotein complex involved in the ATP-dependent degradation of ubiquitinated proteins. This complex plays a key role in the maintenance of protein homeostasis by removing misfolded or damaged proteins, which could impair cellular functions, and by removing proteins whose functions are no longer required. Therefore, the proteasome participates in numerous cellular processes, including cell cycle progression, apoptosis, or DNA damage repair. PSMC5 belongs to the heterohexameric ring of AAA (ATPases associated with diverse cellular activities) proteins that unfolds ubiquitinated target proteins that are concurrently translocated into a proteolytic chamber and degraded into peptides. The polypeptide is 26S proteasome regulatory subunit 8 (PSMC5) (Bos taurus (Bovine)).